A 601-amino-acid polypeptide reads, in one-letter code: Elongation factor 4 (601 aa).

The region spanning 7–189 (DNIRNFSIVA…AIVKRLPAPK (183 aa)) is the tr-type G domain. Residues 19 to 24 (DHGKST) and 136 to 139 (NKVD) contribute to the GTP site.

This sequence belongs to the TRAFAC class translation factor GTPase superfamily. Classic translation factor GTPase family. LepA subfamily.

The protein localises to the cell inner membrane. It carries out the reaction GTP + H2O = GDP + phosphate + H(+). Functionally, required for accurate and efficient protein synthesis under certain stress conditions. May act as a fidelity factor of the translation reaction, by catalyzing a one-codon backward translocation of tRNAs on improperly translocated ribosomes. Back-translocation proceeds from a post-translocation (POST) complex to a pre-translocation (PRE) complex, thus giving elongation factor G a second chance to translocate the tRNAs correctly. Binds to ribosomes in a GTP-dependent manner. The chain is Elongation factor 4 from Methylorubrum extorquens (strain CM4 / NCIMB 13688) (Methylobacterium extorquens).